We begin with the raw amino-acid sequence, 228 residues long: UPF0173 metal-dependent hydrolase BcerKBAB4_4442 (228 aa).

This sequence belongs to the UPF0173 family.

The protein is UPF0173 metal-dependent hydrolase BcerKBAB4_4442 of Bacillus mycoides (strain KBAB4) (Bacillus weihenstephanensis).